A 421-amino-acid polypeptide reads, in one-letter code: Conjugal transfer protein TraB (421 aa).

Transmembrane regions (helical) follow at residues 33–53 (LLILLSIAVGAVGWSGEALLL), 103–123 (LLLWLAASAGFVAVHAAFWPA), 144–164 (LAAAVLMGLPPFGITGWAHPL), 169–189 (ILFPGFGWWGLGATTAGLAMM), 193–213 (YWPAAAIALGGFWFWSAATWT), 287–307 (TVIAGAAVIDPGGYDNVMVTV), 366–386 (LIVWPILHSMLFSPAAIVATG), and 388–408 (GWWTEGTSIVAIQQAGVIAWA). Residues 222–421 (KGVDLEQGQT…GRPVVTAFNT (200 aa)) enclose the CN hydrolase domain.

The protein resides in the cell membrane. In terms of biological role, enhances conjugal transfer of the Ti plasmid. The polypeptide is Conjugal transfer protein TraB (traB) (Agrobacterium fabrum (strain C58 / ATCC 33970) (Agrobacterium tumefaciens (strain C58))).